Consider the following 245-residue polypeptide: Small ribosomal subunit protein uS3 (245 aa).

The region spanning 39 to 108 (IRNYIKKNYY…SVFVNVQEVK (70 aa)) is the KH type-2 domain.

It belongs to the universal ribosomal protein uS3 family. In terms of assembly, part of the 30S ribosomal subunit. Forms a tight complex with proteins S10 and S14.

In terms of biological role, binds the lower part of the 30S subunit head. Binds mRNA in the 70S ribosome, positioning it for translation. This is Small ribosomal subunit protein uS3 from Dictyoglomus turgidum (strain DSM 6724 / Z-1310).